A 406-amino-acid polypeptide reads, in one-letter code: 4-hydroxy-3-methylbut-2-en-1-yl diphosphate synthase (ferredoxin) (406 aa).

[4Fe-4S] cluster contacts are provided by Cys-315, Cys-318, Cys-349, and Glu-356.

This sequence belongs to the IspG family. Requires [4Fe-4S] cluster as cofactor.

It catalyses the reaction (2E)-4-hydroxy-3-methylbut-2-enyl diphosphate + 2 oxidized [2Fe-2S]-[ferredoxin] + H2O = 2-C-methyl-D-erythritol 2,4-cyclic diphosphate + 2 reduced [2Fe-2S]-[ferredoxin] + H(+). It participates in isoprenoid biosynthesis; isopentenyl diphosphate biosynthesis via DXP pathway; isopentenyl diphosphate from 1-deoxy-D-xylulose 5-phosphate: step 5/6. Functionally, converts 2C-methyl-D-erythritol 2,4-cyclodiphosphate (ME-2,4cPP) into 1-hydroxy-2-methyl-2-(E)-butenyl 4-diphosphate. The sequence is that of 4-hydroxy-3-methylbut-2-en-1-yl diphosphate synthase (ferredoxin) from Rippkaea orientalis (strain PCC 8801 / RF-1) (Cyanothece sp. (strain PCC 8801)).